We begin with the raw amino-acid sequence, 348 residues long: tRNA pseudouridine synthase B (348 aa).

Residue Asp52 is the Nucleophile of the active site.

It belongs to the pseudouridine synthase TruB family. Type 1 subfamily.

The enzyme catalyses uridine(55) in tRNA = pseudouridine(55) in tRNA. Functionally, responsible for synthesis of pseudouridine from uracil-55 in the psi GC loop of transfer RNAs. The sequence is that of tRNA pseudouridine synthase B from Rhodopirellula baltica (strain DSM 10527 / NCIMB 13988 / SH1).